The following is a 464-amino-acid chain: Glutamate--tRNA ligase 1 (464 aa).

The 'HIGH' region signature appears at P8–G18. The short motif at P231 to R235 is the 'KMSKS' region element. Residue K234 participates in ATP binding.

Belongs to the class-I aminoacyl-tRNA synthetase family. Glutamate--tRNA ligase type 1 subfamily. Monomer.

It is found in the cytoplasm. It carries out the reaction tRNA(Glu) + L-glutamate + ATP = L-glutamyl-tRNA(Glu) + AMP + diphosphate. In terms of biological role, catalyzes the attachment of glutamate to tRNA(Glu) in a two-step reaction: glutamate is first activated by ATP to form Glu-AMP and then transferred to the acceptor end of tRNA(Glu). The polypeptide is Glutamate--tRNA ligase 1 (Thermotoga sp. (strain RQ2)).